The sequence spans 524 residues: Excitatory amino acid transporter 3 (524 aa).

Residues 1 to 18 are Cytoplasmic-facing; sequence MGKPARKGCDSKRFLKNN. Residues 19 to 38 form a helical membrane-spanning segment; sequence WLLLSTVVAVVLGIVIGVLV. Residues 39–61 are Extracellular-facing; sequence REYSNLSTLDKFYFAFPGEILMR. A glycan (N-linked (GlcNAc...) asparagine) is linked at Asn-43. The helical transmembrane segment at 62–82 threads the bilayer; the sequence is MLKLVILPLIVSSMITGVAAL. Over 83 to 93 the chain is Cytoplasmic; that stretch reads DSNVSGKIGLR. A helical membrane pass occupies residues 94–114; the sequence is AVLYYFCTTIIAVILGIVLVV. Residues Tyr-98, Thr-101, and Thr-102 each contribute to the Na(+) site. Residues 115–205 lie on the Extracellular side of the membrane; sequence SIKPGVTQKV…RTKEYRVVGL (91 aa). Residues Asn-178 and Asn-195 are each glycosylated (N-linked (GlcNAc...) asparagine). A helical membrane pass occupies residues 206-229; it reads YSDGINVLGLIVFCLVFGLVIGKM. The Cytoplasmic segment spans residues 230 to 238; it reads GEKGQILVD. The helical transmembrane segment at 239 to 266 threads the bilayer; sequence FFNALSDATMKIVQIIMCYMPLGILFLI. Over 267-286 the chain is Extracellular; the sequence is AGKIIEVEDWEIFRKLGLYM. Residues 287–308 traverse the membrane as a helical segment; the sequence is VTVLSGLAIHSIVILPLIYFIV. Residues 309 to 313 lie on the Cytoplasmic side of the membrane; the sequence is VRKNP. An intramembrane region (discontinuously helical) is located at residues 314–344; the sequence is FRFAMGMTQALLTALMISSSSATLPVTFRCA. 2 residues coordinate L-aspartate: Ser-331 and Ser-333. Residues 345-353 are Cytoplasmic-facing; the sequence is EEKNRVDKR. A helical membrane pass occupies residues 354–380; the sequence is ITRFVLPVGATINMDGTALYEAVAAVF. Na(+) contacts are provided by Gly-362, Thr-364, Asn-366, and Asp-368. Thr-370 is a binding site for L-aspartate. Residues 381–393 lie on the Extracellular side of the membrane; that stretch reads IAQLNDMDLSIGQ. The discontinuously helical intramembrane region spans 394-427; sequence IITISVTATAASIGAAGVPQAGLVTMVIVLSAVG. Residues Ser-405, Ile-406, and Ala-408 each coordinate Na(+). Residue Val-411 participates in L-aspartate binding. Residues 428 to 440 are Extracellular-facing; that stretch reads LPAEDVTLIIAVD. Residues 441–462 traverse the membrane as a helical segment; sequence WLLDRFRTVVNVLGDAFGTGIV. Residues Arg-447, Thr-448, and Asn-451 each contribute to the L-aspartate site. Positions 451 and 455 each coordinate Na(+). Over 463–524 the chain is Cytoplasmic; sequence EKLSKKELEQ…TISFTQTSQF (62 aa). Residues Ser-517 and Ser-522 each carry the phosphoserine modification.

The protein belongs to the dicarboxylate/amino acid:cation symporter (DAACS) (TC 2.A.23) family. SLC1A1 subfamily. Homotrimer. Interacts with ARL6IP5. Interacts with RTN2 (via N-terminus); the interaction promotes cell surface expression of SLC1A1. Interacts with SORCS2; this interaction is important for normal expression at the cell membrane. Brain, but also small intestine, kidney, liver and heart.

It localises to the cell membrane. The protein resides in the apical cell membrane. Its subcellular location is the synapse. It is found in the synaptosome. The protein localises to the early endosome membrane. It localises to the late endosome membrane. The protein resides in the recycling endosome membrane. The enzyme catalyses K(+)(in) + L-glutamate(out) + 3 Na(+)(out) + H(+)(out) = K(+)(out) + L-glutamate(in) + 3 Na(+)(in) + H(+)(in). It carries out the reaction K(+)(in) + L-aspartate(out) + 3 Na(+)(out) + H(+)(out) = K(+)(out) + L-aspartate(in) + 3 Na(+)(in) + H(+)(in). The catalysed reaction is D-aspartate(out) + K(+)(in) + 3 Na(+)(out) + H(+)(out) = D-aspartate(in) + K(+)(out) + 3 Na(+)(in) + H(+)(in). It catalyses the reaction K(+)(in) + L-cysteine(out) + 3 Na(+)(out) + H(+)(out) = K(+)(out) + L-cysteine(in) + 3 Na(+)(in) + H(+)(in). Functionally, sodium-dependent, high-affinity amino acid transporter that mediates the uptake of L-glutamate and also L-aspartate and D-aspartate. Can also transport L-cysteine. Functions as a symporter that transports one amino acid molecule together with two or three Na(+) ions and one proton, in parallel with the counter-transport of one K(+) ion. Mediates Cl(-) flux that is not coupled to amino acid transport; this avoids the accumulation of negative charges due to aspartate and Na(+) symport. Plays an important role in L-glutamate and L-aspartate reabsorption in renal tubuli. Plays a redundant role in the rapid removal of released glutamate from the synaptic cleft, which is essential for terminating the postsynaptic action of glutamate. Contributes to glutathione biosynthesis and protection against oxidative stress via its role in L-glutamate and L-cysteine transport. Negatively regulated by ARL6IP5. This Oryctolagus cuniculus (Rabbit) protein is Excitatory amino acid transporter 3 (SLC1A1).